Reading from the N-terminus, the 680-residue chain is Cytosolic endo-beta-N-acetylglucosaminidase 1 (680 aa).

Residues 1–15 (MSVAPPAPSPPPFDP) show a composition bias toward pro residues. A disordered region spans residues 1–21 (MSVAPPAPSPPPFDPTKPSTP).

Belongs to the glycosyl hydrolase 85 family.

It localises to the cytoplasm. The protein localises to the cytosol. The enzyme catalyses an N(4)-(oligosaccharide-(1-&gt;3)-[oligosaccharide-(1-&gt;6)]-beta-D-Man-(1-&gt;4)-beta-D-GlcNAc-(1-&gt;4)-alpha-D-GlcNAc)-L-asparaginyl-[protein] + H2O = an oligosaccharide-(1-&gt;3)-[oligosaccharide-(1-&gt;6)]-beta-D-Man-(1-&gt;4)-D-GlcNAc + N(4)-(N-acetyl-beta-D-glucosaminyl)-L-asparaginyl-[protein]. In terms of biological role, endoglycosidase that releases N-glycans from glycoproteins by cleaving the beta-1,4-glycosidic bond in the N,N'-diacetylchitobiose core. Involved in the production of high-mannose type N-glycans during plant development and fruit maturation. This Arabidopsis thaliana (Mouse-ear cress) protein is Cytosolic endo-beta-N-acetylglucosaminidase 1.